Here is a 191-residue protein sequence, read N- to C-terminus: tRNA-specific adenosine deaminase 2 (191 aa).

Residues 20–145 form the CMP/dCMP-type deaminase domain; the sequence is QETEKWMEEA…SVLNIASADL (126 aa). Residue histidine 71 coordinates Zn(2+). The Proton donor role is filled by glutamate 73. Zn(2+)-binding residues include cysteine 107 and cysteine 110.

It belongs to the cytidine and deoxycytidylate deaminase family. ADAT2 subfamily. Requires Zn(2+) as cofactor.

The catalysed reaction is adenosine(34) in tRNA + H2O + H(+) = inosine(34) in tRNA + NH4(+). Its function is as follows. Probably participates in deamination of adenosine-34 to inosine in many tRNAs. The chain is tRNA-specific adenosine deaminase 2 (Adat2) from Mus musculus (Mouse).